Here is a 443-residue protein sequence, read N- to C-terminus: ATP-dependent protease ATPase subunit HslU (443 aa).

ATP is bound by residues isoleucine 18 and 60–65; that span reads GVGKTE. The segment at 139–158 is disordered; the sequence is AKNNWGQNETPAEPSSARQS. ATP contacts are provided by aspartate 256, glutamate 321, and arginine 393.

Belongs to the ClpX chaperone family. HslU subfamily. In terms of assembly, a double ring-shaped homohexamer of HslV is capped on each side by a ring-shaped HslU homohexamer. The assembly of the HslU/HslV complex is dependent on binding of ATP.

It is found in the cytoplasm. ATPase subunit of a proteasome-like degradation complex; this subunit has chaperone activity. The binding of ATP and its subsequent hydrolysis by HslU are essential for unfolding of protein substrates subsequently hydrolyzed by HslV. HslU recognizes the N-terminal part of its protein substrates and unfolds these before they are guided to HslV for hydrolysis. This Erwinia tasmaniensis (strain DSM 17950 / CFBP 7177 / CIP 109463 / NCPPB 4357 / Et1/99) protein is ATP-dependent protease ATPase subunit HslU.